Reading from the N-terminus, the 142-residue chain is MSANYMRLLCLMACCLSICLAYGPVRPIVNRYGRGRVIDVVKPVDTAEAQAAALTNAAGAAAASAKLDGANWYALNRYGWEQGRPLLSKPYGPLDKLYAAALPPRSFVAEIDPVFKKSNYGGLYGDKTITLNTGAKLAVSVA.

The first 21 residues, Met1–Ala21, serve as a signal peptide directing secretion.

It belongs to the chorion protein S16 family.

It is found in the secreted. Functionally, chorion membrane (egg shell) protein; plays a role in protecting the egg from the environment. This is Chorion protein S16 (Cp16) from Drosophila grimshawi (Hawaiian fruit fly).